The sequence spans 94 residues: Acylphosphatase (94 aa).

The Acylphosphatase-like domain occupies 8 to 94 (TVHVIVKGKV…EKRYKHFAQL (87 aa)). Residues Arg-23 and Asn-41 contribute to the active site.

This sequence belongs to the acylphosphatase family.

The catalysed reaction is an acyl phosphate + H2O = a carboxylate + phosphate + H(+). This is Acylphosphatase (acyP) from Bordetella parapertussis (strain 12822 / ATCC BAA-587 / NCTC 13253).